The sequence spans 137 residues: Phospholipase A2 group V (137 aa).

An N-terminal signal peptide occupies residues 1 to 20 (MKRLLTLAWFLACSVPAVPG). 6 disulfides stabilise this stretch: C46–C137, C48–C64, C63–C117, C70–C110, C79–C103, and C97–C108. Residues Y47, G49, and G51 each contribute to the Ca(2+) site. H67 is an active-site residue. Residue D68 coordinates Ca(2+). Residue D111 is part of the active site.

It belongs to the phospholipase A2 family. The cofactor is Ca(2+). Post-translationally, this enzyme lacks one of the seven disulfide bonds found in similar PA2 proteins.

Its subcellular location is the secreted. The protein localises to the cell membrane. The protein resides in the cytoplasmic vesicle. It is found in the phagosome. It localises to the recycling endosome. Its subcellular location is the golgi apparatus. The protein localises to the cis-Golgi network. The protein resides in the trans-Golgi network. The catalysed reaction is a 1,2-diacyl-sn-glycero-3-phosphocholine + H2O = a 1-acyl-sn-glycero-3-phosphocholine + a fatty acid + H(+). The enzyme catalyses 1-hexadecanoyl-2-(9Z-octadecenoyl)-sn-glycero-3-phosphocholine + H2O = 1-hexadecanoyl-sn-glycero-3-phosphocholine + (9Z)-octadecenoate + H(+). It carries out the reaction 1-hexadecanoyl-2-(5Z,8Z,11Z,14Z-eicosatetraenoyl)-sn-glycero-3-phosphocholine + H2O = 1-hexadecanoyl-sn-glycero-3-phosphocholine + (5Z,8Z,11Z,14Z)-eicosatetraenoate + H(+). It catalyses the reaction 1-hexadecanoyl-2-(9Z,12Z-octadecadienoyl)-sn-glycero-3-phosphoethanolamine + H2O = 1-hexadecanoyl-sn-glycero-3-phosphoethanolamine + (9Z,12Z)-octadecadienoate + H(+). The catalysed reaction is 1-hexadecanoyl-2-(5Z,8Z,11Z,14Z-eicosatetraenoyl)-sn-glycero-3-phosphoethanolamine + H2O = 1-hexadecanoyl-sn-glycero-3-phosphoethanolamine + (5Z,8Z,11Z,14Z)-eicosatetraenoate + H(+). The enzyme catalyses 1-octadecanoyl-2-(5Z,8Z,11Z,14Z-eicosatetraenoyl)-sn-glycero-3-phospho-(1D-myo-inositol) + H2O = 1-octadecanoyl-sn-glycero-3-phospho-(1D-myo-inositol) + (5Z,8Z,11Z,14Z)-eicosatetraenoate + H(+). It carries out the reaction 1-hexadecanoyl-2-(9Z-octadecenoyl)-sn-glycero-3-phosphoglycerol + H2O = 1-hexadecanoyl-sn-glycero-3-phosphoglycerol + (9Z)-octadecenoate + H(+). It catalyses the reaction N-hexadecanoyl-1,2-di-(9Z-octadecenoyl)-sn-glycero-3-phosphoethanolamine + H2O = N-hexadecanoyl-1-(9Z-octadecenoyl)-sn-glycero-3-phosphoethanolamine + (9Z)-octadecenoate + H(+). The catalysed reaction is 1'-[1,2-di-(9Z-octadecenoyl)-sn-glycero-3-phospho]-3'-[1-(9Z-octadecenoyl)-sn-glycero-3-phospho]-glycerol + H2O = 1',3'-bis-[1-(9Z-octadecenoyl)-sn-glycero-3-phospho]-glycerol + (9Z)-octadecenoate + H(+). The enzyme catalyses 1',3'-bis[1,2-di-(9Z-octadecenoyl)-sn-glycero-3-phospho]-glycerol + H2O = 1'-[1,2-di-(9Z-octadecenoyl)-sn-glycero-3-phospho]-3'-[1-(9Z-octadecenoyl)-sn-glycero-3-phospho]-glycerol + (9Z)-octadecenoate + H(+). The protein operates within lipid metabolism; phospholipid metabolism. Its pathway is lipid metabolism; leukotriene B4 biosynthesis. It functions in the pathway lipid metabolism; leukotriene C4 biosynthesis. Secretory calcium-dependent phospholipase A2 that primarily targets extracellular phospholipids. Hydrolyzes the ester bond of the fatty acyl group attached at sn-2 position of phospholipids (phospholipase A2 activity), preferentially releasing fatty acyl groups with a low degree of unsaturation such as oleoyl (C18:1) and linoleoyl (C18:2) groups. Hydrolyzes low-density lipoprotein (LDL) phospholipids releasing unsaturated fatty acids that drive macrophage polarization toward an M2 phenotype. May act in an autocrine and paracrine manner. Contributes to lipid remodeling of cellular membranes at different subcellular locations and generation of lipid mediators involved in pathogen clearance. Cleaves sn-2 fatty acyl chains of cardiolipin, a major component of the inner membrane of mitochondria and bacterial membranes. Promotes phagocytosis of bacteria in macrophages through production of lysophosphatidylethanolamines. Displays bactericidal activity against Gram-positive bacteria by directly hydrolyzing phospholipids of the bacterial membrane. Promotes phagocytosis and killing of ingested fungi likely through controlling phagosome-lysosome fusion and phagosome maturation. Plays a role in biosynthesis of cysteinyl leukotrienes (CysLTs) in myeloid cells. In eosinophils, triggers perinuclear arachidonate release and LTC4 synthesis in a PLA2G4A-independent way. In neutrophils, amplifies CysLTs biosynthesis initiated by PLA2G4A. Promotes immune complex clearance in macrophages via stimulating synthesis of CysLTs, which act through CYSLTR1 to trigger phagocytosis. May regulate antigen processing in antigen-presenting cells. In pulmonary macrophages regulates IL33 production required for activation of group 2 innate lymphoid cells. May play a role in the biosynthesis of N-acyl ethanolamines that regulate energy metabolism. Hydrolyzes N-acyl phosphatidylethanolamines to N-acyl lysophosphatidylethanolamines, which are further cleaved by a lysophospholipase D to release N-acyl ethanolamines. The chain is Phospholipase A2 group V (Pla2g5) from Rattus norvegicus (Rat).